A 721-amino-acid polypeptide reads, in one-letter code: Polyribonucleotide nucleotidyltransferase (721 aa).

Asp-495 and Asp-501 together coordinate Mg(2+). The region spanning 562–621 (PRITTIKIRPERIKDIIGPGGKTIKDITARTGTSINIEDDGSVSIASPNQDKVEEAIKMI) is the KH domain. An S1 motif domain is found at 631–699 (GRIYLGTVRK…RSGKIRLSRK (69 aa)). The segment at 699–721 (KEALADSAKKSEGTEPPKGEPAK) is disordered.

This sequence belongs to the polyribonucleotide nucleotidyltransferase family. The cofactor is Mg(2+).

The protein localises to the cytoplasm. It carries out the reaction RNA(n+1) + phosphate = RNA(n) + a ribonucleoside 5'-diphosphate. In terms of biological role, involved in mRNA degradation. Catalyzes the phosphorolysis of single-stranded polyribonucleotides processively in the 3'- to 5'-direction. The sequence is that of Polyribonucleotide nucleotidyltransferase from Anaeromyxobacter dehalogenans (strain 2CP-1 / ATCC BAA-258).